The chain runs to 720 residues: Capsid protein (720 aa).

2 disordered regions span residues glycine 546–phenylalanine 569 and threonine 616–aspartate 691. The segment covering proline 652–alanine 664 has biased composition (acidic residues).

This sequence belongs to the anelloviridae capsid protein family.

The protein resides in the virion. Functionally, self-assembles to form an icosahedral capsid with a T=1 symmetry, about 30 nm in diameter, and consisting of 60 capsid proteins. The capsid encapsulates the genomic DNA. Capsid protein is involved in attachment and entry into the host cell. The sequence is that of Capsid protein from Torque teno douroucouli virus (isolate At-TTV3).